The chain runs to 312 residues: Glyoxylate/hydroxypyruvate reductase A (312 aa).

The active site involves R227. Residue H275 is the Proton donor of the active site.

The protein belongs to the D-isomer specific 2-hydroxyacid dehydrogenase family. GhrA subfamily.

It is found in the cytoplasm. The enzyme catalyses glycolate + NADP(+) = glyoxylate + NADPH + H(+). It carries out the reaction (R)-glycerate + NAD(+) = 3-hydroxypyruvate + NADH + H(+). The catalysed reaction is (R)-glycerate + NADP(+) = 3-hydroxypyruvate + NADPH + H(+). In terms of biological role, catalyzes the NADPH-dependent reduction of glyoxylate and hydroxypyruvate into glycolate and glycerate, respectively. The chain is Glyoxylate/hydroxypyruvate reductase A from Escherichia coli (strain SMS-3-5 / SECEC).